Consider the following 1280-residue polypeptide: Pullulanase A (1280 aa).

The signal sequence occupies residues 1 to 44; the sequence is MRKTPSHTEKKMVYSIRSLKNGTGSVLIGASLVLLAMATPTISS. The segment at 42 to 132 is disordered; sequence ISSDESTPTT…VTTETKAEEP (91 aa). The span at 48–61 shows a compositional bias: low complexity; it reads TPTTNEPNNRNTTT. The segment covering 79–90 has biased composition (polar residues); sequence DISSPGNANASL. The segment covering 115–126 has biased composition (low complexity); sequence EPTTSTSPVTTE. Residues 156-158, Trp-168, Asp-214, 263-265, Trp-276, Lys-318, and Asn-323 each bind substrate; these read WTW and WYW. The Ca(2+) site is built by Ser-661 and Tyr-663. Residues 667-668 and Phe-743 each bind substrate; that span reads YD. Asp-778 serves as the catalytic Nucleophile. Residue Glu-807 is the Proton donor of the active site. A substrate-binding site is contributed by Trp-809. Ca(2+) contacts are provided by Met-828, Thr-831, and Asp-832. Asp-839, Arg-842, and Tyr-849 together coordinate substrate. Residues Asp-882 and Asp-886 each contribute to the Ca(2+) site. Substrate is bound by residues Asn-896, Lys-969, and 989–991; that span reads DSY. Residue Asp-992 coordinates Ca(2+). The interval 1140 to 1248 is disordered; that stretch reads VSQNGTSHES…TPDKQAELPN (109 aa). Over residues 1149 to 1196 the composition is skewed to basic and acidic residues; it reads STAEEKPDSTPSKPEHQNEASHPAHQDPAPEARPDSTKPDAKVADAEN. The span at 1205 to 1218 shows a compositional bias: low complexity; that stretch reads SQAEQPAQEAQASS. Positions 1246–1250 match the LPXTG sorting signal motif; the sequence is LPNTG. The residue at position 1249 (Thr-1249) is a Pentaglycyl murein peptidoglycan amidated threonine. The propeptide at 1250–1280 is removed by sortase; sequence GIKNENKLLFAGISLLALLGLGFLLKNKKEN.

This sequence belongs to the glycosyl hydrolase 13 family.

Its subcellular location is the secreted. It localises to the cell wall. The protein localises to the cell surface. It catalyses the reaction Hydrolysis of (1-&gt;6)-alpha-D-glucosidic linkages in pullulan, amylopectin and glycogen, and in the alpha- and beta-limit dextrins of amylopectin and glycogen.. Its activity is regulated as follows. Inhibited by 4-O-alpha-D-glucopyranosylmoranoline (G1M). Virulence factor. Involved in the degradation of glycogen of the mammalian host cells. Hydrolyzes the alpha-1,6-branchpoints of glycogen. Hydrolyzes pullulan. Does not hydrolyze dextran. Binds to mouse lung alveolar type II cells that are rich in glycogen stores. Is an alpha-glucan-specific carbohydrate-binding protein, which binds to amylose (pure alpha-(1,4)-linked glucose), amylopectin (alpha-(1,4)-linked glucose with alpha-(1,6) branch points), pullulan (linear polymer of mixed alpha-(1,4)- and alpha-(1,6)-linked glucose) and glycogen (similar to amylopectin with more frequent alpha-(1,6) branch points) in vitro. Does not bind to dextran (a linear polymer of alpha-(1,6)-linked glucose). The chain is Pullulanase A from Streptococcus pneumoniae serotype 4 (strain ATCC BAA-334 / TIGR4).